Reading from the N-terminus, the 336-residue chain is Putative ALA-interacting subunit 4 (336 aa).

Residues 36–56 traverse the membrane as a helical segment; it reads VILTFLVSGVVFIPLGVICLF. N-linked (GlcNAc...) asparagine glycosylation occurs at Asn94. Positions 127-142 are enriched in basic and acidic residues; that stretch reads RQDGQLRSPKDEHETK. Residues 127–148 form a disordered region; sequence RQDGQLRSPKDEHETKSCAPED. N-linked (GlcNAc...) asparagine glycosylation is present at Asn167. Residues 290–310 traverse the membrane as a helical segment; that stretch reads FLGIAYLTVGSICLFLAVSFS. N-linked (GlcNAc...) asparagine glycosylation is present at Asn329.

This sequence belongs to the CDC50/LEM3 family. Expressed in flowers. May be restricted to pollen grains.

Its subcellular location is the membrane. This chain is Putative ALA-interacting subunit 4 (ALIS4), found in Arabidopsis thaliana (Mouse-ear cress).